A 189-amino-acid chain; its full sequence is MARLKTVQSKVTKSPRRPFEKERLDQELKLIGTFGLKNKREVWRVKYTLAKVRKAARELLTLEDKDPKRLFEGNALLRRLVKIGVLDETKMKLDYVLGLKVEDFLERRLQTQVFKLGLAKSIHHARILIKQHHIRVRRQVVDVPSFIVRLDSQKHIDFSLQSPYGGGRPGRVKRRTLRKGDGAGGDDEE.

The S4 RNA-binding domain maps to 107-181; the sequence is RRLQTQVFKL…VKRRTLRKGD (75 aa). Residues 161 to 189 are disordered; sequence QSPYGGGRPGRVKRRTLRKGDGAGGDDEE.

The protein belongs to the universal ribosomal protein uS4 family. In terms of assembly, component of the small ribosomal subunit. Part of the small subunit (SSU) processome, composed of more than 70 proteins and the RNA chaperone small nucleolar RNA (snoRNA) U3.

It is found in the cytoplasm. It localises to the nucleus. The protein resides in the nucleolus. Its function is as follows. Component of the small ribosomal subunit. The ribosome is a large ribonucleoprotein complex responsible for the synthesis of proteins in the cell. Part of the small subunit (SSU) processome, first precursor of the small eukaryotic ribosomal subunit. During the assembly of the SSU processome in the nucleolus, many ribosome biogenesis factors, an RNA chaperone and ribosomal proteins associate with the nascent pre-rRNA and work in concert to generate RNA folding, modifications, rearrangements and cleavage as well as targeted degradation of pre-ribosomal RNA by the RNA exosome. This is Small ribosomal subunit protein uS4 (rps-9) from Caenorhabditis elegans.